A 360-amino-acid chain; its full sequence is Phospho-N-acetylmuramoyl-pentapeptide-transferase (360 aa).

Transmembrane regions (helical) follow at residues 26-46 (AILS…IMIK), 70-90 (GTPT…ILLW), 94-114 (SNPY…IGFV), 132-152 (WKYF…YAYG), 168-188 (IMPQ…VGTS), 199-219 (GLAI…AWAT), 236-256 (ASEL…FLWF), 263-283 (VFMG…IAVL), 288-308 (LILV…ILQV), and 338-358 (VIVR…ATLK).

It belongs to the glycosyltransferase 4 family. MraY subfamily. Mg(2+) serves as cofactor.

It localises to the cell inner membrane. It carries out the reaction UDP-N-acetyl-alpha-D-muramoyl-L-alanyl-gamma-D-glutamyl-meso-2,6-diaminopimeloyl-D-alanyl-D-alanine + di-trans,octa-cis-undecaprenyl phosphate = di-trans,octa-cis-undecaprenyl diphospho-N-acetyl-alpha-D-muramoyl-L-alanyl-D-glutamyl-meso-2,6-diaminopimeloyl-D-alanyl-D-alanine + UMP. It participates in cell wall biogenesis; peptidoglycan biosynthesis. In terms of biological role, catalyzes the initial step of the lipid cycle reactions in the biosynthesis of the cell wall peptidoglycan: transfers peptidoglycan precursor phospho-MurNAc-pentapeptide from UDP-MurNAc-pentapeptide onto the lipid carrier undecaprenyl phosphate, yielding undecaprenyl-pyrophosphoryl-MurNAc-pentapeptide, known as lipid I. This is Phospho-N-acetylmuramoyl-pentapeptide-transferase from Vibrio campbellii (strain ATCC BAA-1116).